The primary structure comprises 370 residues: Putative agmatine deiminase (370 aa).

The Amidino-cysteine intermediate role is filled by Cys361.

It belongs to the agmatine deiminase family.

It carries out the reaction agmatine + H2O = N-carbamoylputrescine + NH4(+). This Shewanella sp. (strain MR-4) protein is Putative agmatine deiminase.